A 570-amino-acid polypeptide reads, in one-letter code: Urease subunit alpha (570 aa).

Residues 132-570 (GGFDSHIHYI…LPLAQRYFLF (439 aa)) enclose the Urease domain. The Ni(2+) site is built by H137, H139, and K220. K220 carries the N6-carboxylysine modification. H222 lines the substrate pocket. Residues H249 and H275 each contribute to the Ni(2+) site. H323 (proton donor) is an active-site residue. Ni(2+) is bound at residue D363.

It belongs to the metallo-dependent hydrolases superfamily. Urease alpha subunit family. As to quaternary structure, heterotrimer of UreA (gamma), UreB (beta) and UreC (alpha) subunits. Three heterotrimers associate to form the active enzyme. The cofactor is Ni cation. Carboxylation allows a single lysine to coordinate two nickel ions.

It is found in the cytoplasm. The catalysed reaction is urea + 2 H2O + H(+) = hydrogencarbonate + 2 NH4(+). It functions in the pathway nitrogen metabolism; urea degradation; CO(2) and NH(3) from urea (urease route): step 1/1. This Ruegeria sp. (strain TM1040) (Silicibacter sp.) protein is Urease subunit alpha.